The chain runs to 518 residues: Probable cytosol aminopeptidase (518 aa).

Lys-270 and Asp-275 together coordinate Mn(2+). Residue Lys-282 is part of the active site. The Mn(2+) site is built by Asp-293, Asp-352, and Glu-354. Arg-356 is an active-site residue. Residues 495 to 507 are compositionally biased toward polar residues; the sequence is SRTTRQPGSTGET. The tract at residues 495-518 is disordered; sequence SRTTRQPGSTGETGSRKNRRKSKE.

This sequence belongs to the peptidase M17 family. Mn(2+) serves as cofactor.

The protein resides in the cytoplasm. The catalysed reaction is Release of an N-terminal amino acid, Xaa-|-Yaa-, in which Xaa is preferably Leu, but may be other amino acids including Pro although not Arg or Lys, and Yaa may be Pro. Amino acid amides and methyl esters are also readily hydrolyzed, but rates on arylamides are exceedingly low.. It catalyses the reaction Release of an N-terminal amino acid, preferentially leucine, but not glutamic or aspartic acids.. Presumably involved in the processing and regular turnover of intracellular proteins. Catalyzes the removal of unsubstituted N-terminal amino acids from various peptides. The polypeptide is Probable cytosol aminopeptidase (Nitrosospira multiformis (strain ATCC 25196 / NCIMB 11849 / C 71)).